The following is a 138-amino-acid chain: Cysteine desulfuration protein SufE (138 aa).

Cys51 functions as the Cysteine persulfide intermediate in the catalytic mechanism.

It belongs to the SufE family. In terms of assembly, homodimer. Interacts with SufS.

It localises to the cytoplasm. It functions in the pathway cofactor biosynthesis; iron-sulfur cluster biosynthesis. Its function is as follows. Participates in cysteine desulfuration mediated by SufS. Cysteine desulfuration mobilizes sulfur from L-cysteine to yield L-alanine and constitutes an essential step in sulfur metabolism for biosynthesis of a variety of sulfur-containing biomolecules. Functions as a sulfur acceptor for SufS, by mediating the direct transfer of the sulfur atom from the S-sulfanylcysteine of SufS, an intermediate product of cysteine desulfuration process. The chain is Cysteine desulfuration protein SufE from Sodalis glossinidius (strain morsitans).